We begin with the raw amino-acid sequence, 218 residues long: Cytochrome P450 3A19 (218 aa).

Cys-153 lines the heme pocket.

The protein belongs to the cytochrome P450 family. Heme serves as cofactor.

The protein resides in the endoplasmic reticulum membrane. The protein localises to the microsome membrane. The enzyme catalyses an organic molecule + reduced [NADPH--hemoprotein reductase] + O2 = an alcohol + oxidized [NADPH--hemoprotein reductase] + H2O + H(+). Functionally, cytochromes P450 are a group of heme-thiolate monooxygenases. In liver microsomes, this enzyme is involved in an NADPH-dependent electron transport pathway. It oxidizes a variety of structurally unrelated compounds, including steroids, fatty acids, and xenobiotics. The sequence is that of Cytochrome P450 3A19 (CYP3A19) from Capra hircus aegagrus (Wild goat).